Reading from the N-terminus, the 544-residue chain is GDP-mannose 4,6-dehydratase sdnI (544 aa).

Residues 16–21 (GITGQD), R41, 64–65 (DM), and 86–90 (LAAQS) contribute to the NADP(+) site. Residue S90 participates in substrate binding. Residues E135 and Y157 each act as nucleophile in the active site. Substrate is bound at residue Y157. Residue K161 coordinates NADP(+). Residue N186 participates in substrate binding. Residues H187 and R192 each contribute to the NADP(+) site. Residues 192–200 (RGTTFVTRK), G219, R225, and 303–306 (RPVE) each bind substrate. Residues 366–406 (GETTSAVNSSPSSTAGDTYKASDGWSTSGAEGSEQTECSSV) are disordered. Polar residues-rich tracts occupy residues 368-381 (TTSA…STAG) and 389-404 (GWST…TECS).

This sequence belongs to the NAD(P)-dependent epimerase/dehydratase family. GDP-mannose 4,6-dehydratase subfamily. NADP(+) serves as cofactor.

The enzyme catalyses GDP-alpha-D-mannose = GDP-4-dehydro-alpha-D-rhamnose + H2O. The protein operates within antibiotic biosynthesis. In terms of biological role, GDP-mannose 4,6-dehydratase; part of the gene cluster that mediates the biosynthesis of sordarin and hypoxysordarin, glycoside antibiotics with a unique tetracyclic diterpene aglycone structure. First, the geranylgeranyl diphosphate synthase sdnC constructs GGDP from farnesyl diphosphate and isopentenyl diphosphate. The diterpene cyclase sdnA then catalyzes the cyclization of GGDP to afford cycloaraneosene. Cycloaraneosene is then hydroxylated four times by the putative cytochrome P450 monooxygenases sdnB, sdnE, sdnF and sdnH to give a hydroxylated cycloaraneosene derivative such as cycloaraneosene-8,9,13,19-tetraol. Although the order of the hydroxylations is unclear, at least C8, C9 and C13 of the cycloaraneosene skeleton are hydroxylated before the sordaricin formation. Dehydration of the 13-hydroxy group of the hydroxylated cycloaraneosene derivative might be catalyzed by an unassigned hypothetical protein such as sdnG and sdnP to construct the cyclopentadiene moiety. The FAD-dependent oxidoreductase sdnN is proposed to catalyze the oxidation at C9 of the hydroxylated cycloaraneosene derivative and also catalyze the Baeyer-Villiger oxidation to give the lactone intermediate. The presumed lactone intermediate would be hydrolyzed to give an acrolein moiety and a carboxylate moiety. Then, [4+2]cycloaddition would occur between the acrolein moiety and the cyclopentadiene moiety to give sordaricin. SdnN might also be involved in the [4+2]cycloaddition after the hypothesized oxidation to accommodate the oxidized product and prompt the [4+2]cycloaddition. GDP-6-deoxy-D-altrose may be biosynthesized from GDP-D-mannose by the putative GDP-mannose-4,6-dehydratase sdnI and the short-chain dehydrogenase sdnK. The glycosyltransferase sdnJ catalyzes the attachment of 6-deoxy-D-altrose onto the 19-hydroxy group of sordaricin to give 4'-O-demethylsordarin. The methyltransferase sdnD would complete the biosynthesis of sordarin. Sordarin can be further modified into hypoxysordarin. The unique acyl chain at the 3'-hydroxy group of hypoxysordarin would be constructed by an iterative type I PKS sdnO and the trans-acting polyketide methyltransferase sdnL. SdnL would be responsible for the introduction of an alpha-methyl group of the polyketide chain. Alternatively, the beta-lactamase-like protein sdnR might be responsible for the cleavage and transfer of the polyketide chain from the PKS sdnO to sordarin. Two putative cytochrome P450 monooxygenases, sdnQ and sdnT, might catalyze the epoxidations of the polyketide chain to complete the biosynthesis of hypoxysordarin. Transcriptional regulators sdnM and sdnS are presumably encoded for the transcriptional regulation of the expression of the sdn gene cluster. In Sordaria araneosa (Pleurage araneosa), this protein is GDP-mannose 4,6-dehydratase sdnI.